A 159-amino-acid chain; its full sequence is Globin-like protein (159 aa).

Positions 1–152 constitute a Globin domain; that stretch reads MSMNRQEISD…FNAESQTHLK (152 aa). A heme-binding site is contributed by H101.

This sequence belongs to the globin family. In terms of assembly, homodimer. In terms of tissue distribution, expressed mainly in a subset of neuronal cells and in head muscular tissue.

It is found in the cytoplasm. In terms of biological role, may be a globin and may play a role in oxygen transport. This Caenorhabditis elegans protein is Globin-like protein (glb-1).